A 579-amino-acid chain; its full sequence is Eukaryotic translation initiation factor 3 subunit D (579 aa).

3 disordered regions span residues 1–20 (MASFKLPELQPDNDLWGPAS), 51–72 (NASGASNDAANARGGRQGRARD), and 109–170 (RRGG…FGWK). Over residues 51-64 (NASGASNDAANARG) the composition is skewed to low complexity. Residues 120–167 (GGRGGRGGAGGAGAAGGRGASKFGAGAGRGARGGRGGAAGARRGGGRF) show a composition bias toward gly residues. An RNA gate region spans residues 307-321 (AFDYLTVNENAADPP).

It belongs to the eIF-3 subunit D family. As to quaternary structure, component of the eukaryotic translation initiation factor 3 (eIF-3) complex.

It localises to the cytoplasm. In terms of biological role, mRNA cap-binding component of the eukaryotic translation initiation factor 3 (eIF-3) complex, which is involved in protein synthesis of a specialized repertoire of mRNAs and, together with other initiation factors, stimulates binding of mRNA and methionyl-tRNAi to the 40S ribosome. The eIF-3 complex specifically targets and initiates translation of a subset of mRNAs involved in cell proliferation. In the eIF-3 complex, eif3d specifically recognizes and binds the 7-methylguanosine cap of a subset of mRNAs. This chain is Eukaryotic translation initiation factor 3 subunit D, found in Mycosarcoma maydis (Corn smut fungus).